The primary structure comprises 50 residues: Large ribosomal subunit protein eL39 (50 aa).

It belongs to the eukaryotic ribosomal protein eL39 family.

This Archaeoglobus fulgidus (strain ATCC 49558 / DSM 4304 / JCM 9628 / NBRC 100126 / VC-16) protein is Large ribosomal subunit protein eL39 (rpl39e).